The primary structure comprises 247 residues: UPF0259 membrane protein BUAPTUC7_273 (247 aa).

Transmembrane regions (helical) follow at residues 20–40 (IGAIFFISIFATFMNILIDMF), 85–105 (IMESLISKTTLLGSIIILISF), 114–134 (IVSSIRTFFLFFPSLFILNFL), 137–157 (FIIQIGFMLLIIPGILLSIIL), 188–208 (IIGPGVLFWMCGKFILTMLLA), and 218–238 (LFLISNISMNILFSILIIYLF).

The protein belongs to the UPF0259 family.

It localises to the cell membrane. The chain is UPF0259 membrane protein BUAPTUC7_273 from Buchnera aphidicola subsp. Acyrthosiphon pisum (strain Tuc7).